A 370-amino-acid chain; its full sequence is Histidinol-phosphate aminotransferase (370 aa).

N6-(pyridoxal phosphate)lysine is present on Lys-229.

Belongs to the class-II pyridoxal-phosphate-dependent aminotransferase family. Histidinol-phosphate aminotransferase subfamily. As to quaternary structure, homodimer. Pyridoxal 5'-phosphate serves as cofactor.

The catalysed reaction is L-histidinol phosphate + 2-oxoglutarate = 3-(imidazol-4-yl)-2-oxopropyl phosphate + L-glutamate. It functions in the pathway amino-acid biosynthesis; L-histidine biosynthesis; L-histidine from 5-phospho-alpha-D-ribose 1-diphosphate: step 7/9. The protein is Histidinol-phosphate aminotransferase of Helicobacter hepaticus (strain ATCC 51449 / 3B1).